The chain runs to 244 residues: Reticulon-like protein B7 (244 aa).

The Reticulon domain maps to 70–244 (PADVLLWRDK…EAKFLSKIPH (175 aa)). A run of 3 helical transmembrane segments spans residues 80-100 (KVTL…GFGG), 103-123 (LLTS…LWSN), and 172-192 (FVMA…FSFL).

The protein localises to the endoplasmic reticulum membrane. The protein is Reticulon-like protein B7 (RTNLB7) of Arabidopsis thaliana (Mouse-ear cress).